Consider the following 336-residue polypeptide: Atypical chemokine receptor 1 (336 aa).

The Extracellular segment spans residues 1-63; that stretch reads MGNCLHQAEL…CSLLNDSSLP (63 aa). 4 N-linked (GlcNAc...) asparagine glycosylation sites follow: Asn-16, Asn-27, Asn-33, and Asn-58. 2 disulfides stabilise this stretch: Cys-51-Cys-276 and Cys-129-Cys-195. Residues 64 to 84 traverse the membrane as a helical segment; that stretch reads FFILASDLGILASSTVLFMLF. The Cytoplasmic segment spans residues 85–95; it reads RPLFRWQLCPG. The chain crosses the membrane as a helical span at residues 96–116; the sequence is WPVLAQLAVGSALFSIVVPIL. Over 117-129 the chain is Extracellular; that stretch reads APGLGNTHSSALC. Residues 130–153 form a helical membrane-spanning segment; the sequence is SLGYCVWYGSAFAQALLLGCHASL. The Cytoplasmic portion of the chain corresponds to 154–166; that stretch reads GPKLGAGQVPGLT. A helical transmembrane segment spans residues 167–187; sequence LGLPVGLWGATALLTLPITLA. The Extracellular segment spans residues 188–207; sequence SGASDGLCTPIYSTELEALQ. The chain crosses the membrane as a helical span at residues 208-228; it reads ATHAVACFAIFVLLPLGLFGA. Residues 229–244 are Cytoplasmic-facing; that stretch reads KGLKKALGMGPGPWMN. A helical membrane pass occupies residues 245 to 265; sequence ILWVWFIFWWPHGLVLGLDFL. Topologically, residues 266 to 287 are extracellular; that stretch reads VGSKLSLLPTCLAQQVLDLLLN. Residues 288–308 traverse the membrane as a helical segment; sequence LAEALAIVHCVATPLLLALFC. Residues 309–336 are Cytoplasmic-facing; the sequence is HQTTRTLLPSLPLPERWSSPVDTLGSKS.

The protein belongs to the G-protein coupled receptor 1 family. Atypical chemokine receptor subfamily.

The protein localises to the early endosome. The protein resides in the recycling endosome. Its subcellular location is the membrane. Functionally, atypical chemokine receptor that controls chemokine levels and localization via high-affinity chemokine binding that is uncoupled from classic ligand-driven signal transduction cascades, resulting instead in chemokine sequestration, degradation, or transcytosis. Also known as interceptor (internalizing receptor) or chemokine-scavenging receptor or chemokine decoy receptor. Has a promiscuous chemokine-binding profile, interacting with inflammatory chemokines of both the CXC and the CC subfamilies but not with homeostatic chemokines. Acts as a receptor for chemokines including CCL2, CCL5, CCL7, CCL11, CCL13, CCL14, CCL17, CXCL5, CXCL6, IL8/CXCL8, CXCL11, GRO, RANTES, MCP-1 and TARC. May regulate chemokine bioavailability and, consequently, leukocyte recruitment through two distinct mechanisms: when expressed in endothelial cells, it sustains the abluminal to luminal transcytosis of tissue-derived chemokines and their subsequent presentation to circulating leukocytes; when expressed in erythrocytes, serves as blood reservoir of cognate chemokines but also as a chemokine sink, buffering potential surges in plasma chemokine levels. The chain is Atypical chemokine receptor 1 (ACKR1) from Saimiri boliviensis boliviensis (Bolivian squirrel monkey).